Reading from the N-terminus, the 149-residue chain is D-aminoacyl-tRNA deacylase (149 aa).

Positions 137 to 138 match the Gly-cisPro motif, important for rejection of L-amino acids motif; the sequence is GP.

This sequence belongs to the DTD family. In terms of assembly, homodimer.

Its subcellular location is the cytoplasm. It carries out the reaction glycyl-tRNA(Ala) + H2O = tRNA(Ala) + glycine + H(+). The catalysed reaction is a D-aminoacyl-tRNA + H2O = a tRNA + a D-alpha-amino acid + H(+). An aminoacyl-tRNA editing enzyme that deacylates mischarged D-aminoacyl-tRNAs. Also deacylates mischarged glycyl-tRNA(Ala), protecting cells against glycine mischarging by AlaRS. Acts via tRNA-based rather than protein-based catalysis; rejects L-amino acids rather than detecting D-amino acids in the active site. By recycling D-aminoacyl-tRNA to D-amino acids and free tRNA molecules, this enzyme counteracts the toxicity associated with the formation of D-aminoacyl-tRNA entities in vivo and helps enforce protein L-homochirality. In Syntrophomonas wolfei subsp. wolfei (strain DSM 2245B / Goettingen), this protein is D-aminoacyl-tRNA deacylase.